Reading from the N-terminus, the 106-residue chain is UPF0145 protein Daci_3728 (106 aa).

The protein belongs to the UPF0145 family.

The polypeptide is UPF0145 protein Daci_3728 (Delftia acidovorans (strain DSM 14801 / SPH-1)).